A 1306-amino-acid polypeptide reads, in one-letter code: Synergin gamma (1306 aa).

The stretch at 113-153 (MQKQFAEEQQKRFEQQQKLLEEERKRRQFEEQKQKLRLLSS) forms a coiled coil. 2 disordered regions span residues 176-196 (GFSRDAKMHPTPASHPKKQGP) and 252-285 (SGPASAEAEKTSDQTLSKEESGVGVFPSQDPAQS). Positions 258 to 272 (EAEKTSDQTLSKEES) are enriched in basic and acidic residues. In terms of domain architecture, EH spans 293–404 (NESLVPDAYK…TPVSQPTAMP (112 aa)). The DFXDF motif 1 motif lies at 455 to 459 (DFQDF). The disordered stretch occupies residues 460 to 494 (QDASKSGSIDDSFTDFQEMPASSKTSNSQHGNSAP). Ser-471 bears the Phosphoserine mark. Lys-509 is subject to N6-acetyllysine. An interaction with AP1G1 region spans residues 514-778 (KGISTDKPSE…ADFHSSKFSS (265 aa)). The tract at residues 559–601 (STGTDDGFTDFKTADSVSPLEPPTKDTFPSAFASGAAQQTQTQ) is disordered. The residue at position 576 (Ser-576) is a Phosphoserine. An interaction with AP1G1, AP1G2 and GGA1 region spans residues 661–673 (LADDFGEFNLFGE). The DFXDF motif 2 signature appears at 685 to 689 (DFADF). Residues 697–730 (ISSEPKASDKYEALREEVSPSPLSSSTVEGAQHP) form a disordered region. Residues 702-714 (KASDKYEALREEV) show a composition bias toward basic and acidic residues. Position 715 is a phosphoserine (Ser-715). Lys-736 carries the post-translational modification N6-acetyllysine. Phosphoserine occurs at positions 744 and 764. Positions 767–771 (DFADF) match the DFXDF motif 3 motif. Phosphoserine occurs at positions 804, 844, 847, 901, 911, 927, 974, 998, 1065, 1067, 1079, and 1090. 2 disordered regions span residues 986 to 1016 (PTVDRSQETSCPSPASSVASHETPKEGADDF) and 1065 to 1090 (SLSLGDKEISRSSPSPALEQPFRDRS). A compositionally biased stretch (polar residues) spans 993 to 1005 (ETSCPSPASSVAS). Thr-1092 bears the Phosphothreonine mark.

As to quaternary structure, self-associates. Interacts with GGA1 (via GAE domain). Interacts with GGA2 and GGA3. Interacts with AP1G1 (via GAE domain), a subunit of adapter protein complex AP-1. Interacts with AP1G2 (via GAE domain) a subunit of adapter protein complex AP-1. Component of the aftiphilin/p200/gamma-synergin complex, at least composed of AFTPH/aftiphilin, HEATR5B/p200a and SYNRG/gamma-synergin, which plays a role in the AP1G1/AP-1-mediated trafficking of transferrin from early to recycling endosomes. Within the complex interacts with AFTPH/aftiphilin and HEATR5B/p200a; the interactions are direct. Interacts (via EH domain) with SCAMP1.

It localises to the cytoplasm. It is found in the cytosol. The protein resides in the golgi apparatus. The protein localises to the trans-Golgi network membrane. Its subcellular location is the perinuclear region. It localises to the cytoplasmic vesicle. It is found in the clathrin-coated vesicle. Its function is as follows. Plays a role in endocytosis and/or membrane trafficking at the trans-Golgi network (TGN). May act by linking the adapter protein complex AP-1 to other proteins. Component of clathrin-coated vesicles. Component of the aftiphilin/p200/gamma-synergin complex, which plays roles in AP1G1/AP-1-mediated protein trafficking including the trafficking of transferrin from early to recycling endosomes, and the membrane trafficking of furin and the lysosomal enzyme cathepsin D between the trans-Golgi network (TGN) and endosomes. The protein is Synergin gamma (Synrg) of Mus musculus (Mouse).